The following is a 356-amino-acid chain: N-acyl-phosphatidylethanolamine-hydrolyzing phospholipase D 1 (356 aa).

Zn(2+)-binding residues include His-144 and His-146. Tyr-147 provides a ligand contact to an N-acyl-1,2-diacyl-sn-glycero-3-phosphoethanolamine. Residues Asp-148, His-149, His-217, and Asp-248 each coordinate Zn(2+). His-286 provides a ligand contact to an N-acyl-1,2-diacyl-sn-glycero-3-phosphoethanolamine. His-308 is a Zn(2+) binding site.

Belongs to the NAPE-PLD family. Zn(2+) is required as a cofactor. In terms of tissue distribution, expressed in interneurons that are in close proximity to the primary sensory neurons. Predominantly expressed in the pharynx but can also be found in cell bodies of the dorsal and ventral nerve cords.

The catalysed reaction is an N-acyl-1,2-diacyl-sn-glycero-3-phosphoethanolamine + H2O = an N-acylethanolamine + a 1,2-diacyl-sn-glycero-3-phosphate + H(+). The enzyme catalyses 1,2-dihexadecanoyl-sn-glycero-3-phospho-(N-hexadecanoyl)-ethanolamine + H2O = 1,2-dihexadecanoyl-sn-glycero-3-phosphate + N-hexadecanoylethanolamine + H(+). It catalyses the reaction N-(5Z,8Z,11Z,14Z-eicosatetraenoyl)-1,2-di-(9Z-octadecenoyl)-sn-glycero-3-phosphoethanolamine + H2O = N-(5Z,8Z,11Z,14Z-eicosatetraenoyl)-ethanolamine + 1,2-di-(9Z-octadecenoyl)-sn-glycero-3-phosphate + H(+). Functionally, D-type phospholipase that hydrolyzes N-acyl-phosphatidylethanolamines (NAPEs) to produce bioactive N-acylethanolamines/fatty acid ethanolamides (NAEs/FAEs) and phosphatidic acid. NAEs are bioactive lipids that are involved in diverse physiological processes such as growth and lifespan. The sequence is that of N-acyl-phosphatidylethanolamine-hydrolyzing phospholipase D 1 from Caenorhabditis elegans.